A 31-amino-acid polypeptide reads, in one-letter code: ARRRRSRRASRPVRRRRPRRVSRRRRARRRR.

Positions 1-31 (ARRRRSRRASRPVRRRRPRRVSRRRRARRRR) are disordered.

In terms of tissue distribution, testis.

It is found in the nucleus. It localises to the chromosome. Protamines substitute for histones in the chromatin of sperm during the haploid phase of spermatogenesis. They compact sperm DNA into a highly condensed, stable and inactive complex. This is Protamine-Z from Clupea harengus (Atlantic herring).